A 205-amino-acid polypeptide reads, in one-letter code: Probable ADP-ribosylation factor At2g15310 (205 aa).

Residue Gly-2 is the site of N-myristoyl glycine attachment. GTP-binding positions include 24 to 31 (GLDGSGKT), 67 to 71 (DIGGQ), and 126 to 129 (NKQD).

It belongs to the small GTPase superfamily. Arf family.

It is found in the golgi apparatus. In terms of biological role, GTP-binding protein involved in protein trafficking; may modulate vesicle budding and uncoating within the Golgi apparatus. The sequence is that of Probable ADP-ribosylation factor At2g15310 from Arabidopsis thaliana (Mouse-ear cress).